The primary structure comprises 375 residues: Tyrosine--tRNA ligase (375 aa).

5 residues coordinate L-tyrosine: Tyr-37, Tyr-168, Gln-172, Asp-175, and Gln-190. The 'KMSKS' region signature appears at 251–255 (KMSKS). Lys-254 lines the ATP pocket.

It belongs to the class-I aminoacyl-tRNA synthetase family. TyrS type 4 subfamily. Homodimer.

The protein localises to the cytoplasm. It carries out the reaction tRNA(Tyr) + L-tyrosine + ATP = L-tyrosyl-tRNA(Tyr) + AMP + diphosphate + H(+). Functionally, catalyzes the attachment of tyrosine to tRNA(Tyr) in a two-step reaction: tyrosine is first activated by ATP to form Tyr-AMP and then transferred to the acceptor end of tRNA(Tyr). The sequence is that of Tyrosine--tRNA ligase from Thermococcus onnurineus (strain NA1).